The primary structure comprises 400 residues: Mu-type opioid receptor (400 aa).

Residues methionine 1–isoleucine 68 lie on the Extracellular side of the membrane. Asparagine 9, asparagine 12, asparagine 33, asparagine 40, and asparagine 48 each carry an N-linked (GlcNAc...) asparagine glycan. Residues threonine 69–tyrosine 93 form a helical membrane-spanning segment. Residues valine 94–asparagine 106 lie on the Cytoplasmic side of the membrane. The helical transmembrane segment at isoleucine 107–leucine 131 threads the bilayer. The Extracellular portion of the chain corresponds to methionine 132 to cysteine 142. A disulfide bond links cysteine 142 and cysteine 219. The helical transmembrane segment at lysine 143–valine 165 threads the bilayer. At aspartate 166–asparagine 185 the chain is on the cytoplasmic side. Tyrosine 168 bears the Phosphotyrosine mark. Residues alanine 186–methionine 207 form a helical membrane-spanning segment. Residues alanine 208 to tryptophan 230 are Extracellular-facing. The helical transmembrane segment at glutamate 231–glycine 255 threads the bilayer. Residues leucine 256–arginine 279 lie on the Cytoplasmic side of the membrane. A helical transmembrane segment spans residues isoleucine 280–alanine 306. Topologically, residues leucine 307–threonine 314 are extracellular. A helical membrane pass occupies residues phenylalanine 315 to tyrosine 338. An NPxxY; plays a role in stabilizing the activated conformation of the receptor motif is present at residues asparagine 334–tyrosine 338. The Cytoplasmic segment spans residues alanine 339–proline 400. Residue cysteine 353 is the site of S-palmitoyl cysteine attachment. Position 365 is a phosphoserine (serine 365). Threonine 372 is modified (phosphothreonine). Phosphoserine is present on serine 377. At threonine 396 the chain carries Phosphothreonine.

Belongs to the G-protein coupled receptor 1 family. As to quaternary structure, forms homooligomers and heterooligomers with other GPCRs, such as OPRD1, OPRK1, OPRL1, NPFFR2, ADRA2A, SSTR2, CNR1 and CCR5 (probably in dimeric forms). Interacts with heterotrimeric G proteins; interaction with a heterotrimeric complex containing GNAI1, GNB1 and GNG2 stabilizes the active conformation of the receptor and increases its affinity for endomorphin-2, the synthetic opioid peptide DAMGO and for morphinan agonists. Interacts with PPL; the interaction disrupts agonist-mediated G-protein activation. Interacts (via C-terminus) with DNAJB4 (via C-terminus). Interacts with calmodulin; the interaction inhibits the constitutive activity of OPRM1; it abolishes basal and attenuates agonist-stimulated G-protein coupling. Interacts with FLNA, PLD2, RANBP9 and WLS and GPM6A. Interacts with RTP4. Interacts with SYP and GNAS. Interacts with RGS9, RGS17, RGS20, RGS4, PPP1R9B and HINT1. Phosphorylated. Differentially phosphorylated in basal and agonist-induced conditions. Agonist-mediated phosphorylation modulates receptor internalization. Phosphorylated by GRK2 in a agonist-dependent manner. Phosphorylation at Tyr-168 requires receptor activation, is dependent on non-receptor protein tyrosine kinase Src and results in a decrease in agonist efficacy by reducing G-protein coupling efficiency. Phosphorylated on tyrosine residues; the phosphorylation is involved in agonist-induced G-protein-independent receptor down-regulation. Phosphorylation at Ser-377 is involved in G-protein-dependent but not beta-arrestin-dependent activation of the ERK pathway. Post-translationally, ubiquitinated. A basal ubiquitination seems not to be related to degradation. Ubiquitination is increased upon formation of OPRM1:OPRD1 oligomers leading to proteasomal degradation; the ubiquitination is diminished by RTP4.

Its subcellular location is the cell membrane. It is found in the cell projection. It localises to the axon. The protein resides in the perikaryon. The protein localises to the dendrite. Its subcellular location is the endosome. Receptor for endogenous opioids such as beta-endorphin and endomorphin. Receptor for natural and synthetic opioids including morphine, heroin, DAMGO, fentanyl, etorphine, buprenorphin and methadone. Also activated by enkephalin peptides, such as Met-enkephalin or Met-enkephalin-Arg-Phe, with higher affinity for Met-enkephalin-Arg-Phe. Agonist binding to the receptor induces coupling to an inactive GDP-bound heterotrimeric G-protein complex and subsequent exchange of GDP for GTP in the G-protein alpha subunit leading to dissociation of the G-protein complex with the free GTP-bound G-protein alpha and the G-protein beta-gamma dimer activating downstream cellular effectors. The agonist- and cell type-specific activity is predominantly coupled to pertussis toxin-sensitive G(i) and G(o) G alpha proteins, GNAI1, GNAI2, GNAI3 and GNAO1, and to a lesser extent to pertussis toxin-insensitive G alpha proteins GNAZ and GNA15. They mediate an array of downstream cellular responses, including inhibition of adenylate cyclase activity and both N-type and L-type calcium channels, activation of inward rectifying potassium channels, mitogen-activated protein kinase (MAPK), phospholipase C (PLC), phosphoinositide/protein kinase (PKC), phosphoinositide 3-kinase (PI3K) and regulation of NF-kappa-B. Also couples to adenylate cyclase stimulatory G alpha proteins. The selective temporal coupling to G-proteins and subsequent signaling can be regulated by RGSZ proteins, such as RGS9, RGS17 and RGS4. Phosphorylation by members of the GPRK subfamily of Ser/Thr protein kinases and association with beta-arrestins is involved in short-term receptor desensitization. Beta-arrestins associate with the GPRK-phosphorylated receptor and uncouple it from the G-protein thus terminating signal transduction. The phosphorylated receptor is internalized through endocytosis via clathrin-coated pits which involves beta-arrestins. The activation of the ERK pathway occurs either in a G-protein-dependent or a beta-arrestin-dependent manner and is regulated by agonist-specific receptor phosphorylation. Acts as a class A G-protein coupled receptor (GPCR) which dissociates from beta-arrestin at or near the plasma membrane and undergoes rapid recycling. Receptor down-regulation pathways are varying with the agonist and occur dependent or independent of G-protein coupling. Endogenous ligands induce rapid desensitization, endocytosis and recycling. Heterooligomerization with other GPCRs can modulate agonist binding, signaling and trafficking properties. Involved in neurogenesis. This Saimiri boliviensis boliviensis (Bolivian squirrel monkey) protein is Mu-type opioid receptor (OPRM1).